A 255-amino-acid chain; its full sequence is Imidazole glycerol phosphate synthase subunit HisF (255 aa).

Active-site residues include D12 and D131.

The protein belongs to the HisA/HisF family. Heterodimer of HisH and HisF.

The protein resides in the cytoplasm. The enzyme catalyses 5-[(5-phospho-1-deoxy-D-ribulos-1-ylimino)methylamino]-1-(5-phospho-beta-D-ribosyl)imidazole-4-carboxamide + L-glutamine = D-erythro-1-(imidazol-4-yl)glycerol 3-phosphate + 5-amino-1-(5-phospho-beta-D-ribosyl)imidazole-4-carboxamide + L-glutamate + H(+). It functions in the pathway amino-acid biosynthesis; L-histidine biosynthesis; L-histidine from 5-phospho-alpha-D-ribose 1-diphosphate: step 5/9. In terms of biological role, IGPS catalyzes the conversion of PRFAR and glutamine to IGP, AICAR and glutamate. The HisF subunit catalyzes the cyclization activity that produces IGP and AICAR from PRFAR using the ammonia provided by the HisH subunit. In Zymomonas mobilis subsp. mobilis (strain ATCC 31821 / ZM4 / CP4), this protein is Imidazole glycerol phosphate synthase subunit HisF.